The following is a 677-amino-acid chain: Zinc finger CCCH domain-containing protein 23 (677 aa).

A disordered region spans residues 66-117; the sequence is PPQAASSSPTVPAAHSPFLLSRQNSGRCPAPSPSSWAQAQPFSRSNSMGNGG. Residues 69–82 show a composition bias toward low complexity; the sequence is AASSSPTVPAAHSP. A compositionally biased stretch (polar residues) spans 98 to 113; it reads PSSWAQAQPFSRSNSM. The C3H1-type zinc-finger motif lies at 228 to 255; the sequence is GFGWKPCLYYARGFCKNGSTCRFVHGGL. The RRM domain maps to 359–435; that stretch reads RQIYLTFPAD…RVLVKPYKEK (77 aa). Residues 480–513 adopt a coiled-coil conformation; sequence ANELMLRRKLEEQQQAAELQQAIDLHSRRLIGLQ. A compositionally biased stretch (polar residues) spans 535–562; it reads TPITNAFTSGQPGATTIVESPPSSTGQL. Residues 535–607 are disordered; that stretch reads TPITNAFTSG…EHNLPDSPFA (73 aa). Residues 589-601 are compositionally biased toward basic and acidic residues; it reads RNADSDQSGEHNL.

This chain is Zinc finger CCCH domain-containing protein 23, found in Oryza sativa subsp. japonica (Rice).